Consider the following 214-residue polypeptide: MSRYRGPRVKKIKRLGSLPGLTTKKPPIVVRDPRKLSRPKPKKKSQYRIRLEEKQKLRFHYGLTERQLLKYVRIAGKAKGPTGQVLLQLLEMRLDNTLFRLGMASTIPQARQLVNHRHILVNGRIVDIPSYRCKPRDLISGREKEKSKALIQNYLDSTAKRPIPLPKHLLLFHSDDPRDLLKGSVKKIIDRKEVGLKKIKELLVIEYYSRQISP.

Basic residues-rich tracts occupy residues 1 to 14 (MSRY…KIKR) and 36 to 46 (LSRPKPKKKSQ). The interval 1-46 (MSRYRGPRVKKIKRLGSLPGLTTKKPPIVVRDPRKLSRPKPKKKSQ) is disordered. The 62-residue stretch at 92–153 (MRLDNTLFRL…KEKSKALIQN (62 aa)) folds into the S4 RNA-binding domain.

This sequence belongs to the universal ribosomal protein uS4 family. In terms of assembly, part of the 30S ribosomal subunit. Contacts protein S5. The interaction surface between S4 and S5 is involved in control of translational fidelity.

It localises to the plastid. The protein localises to the chloroplast. In terms of biological role, one of the primary rRNA binding proteins, it binds directly to 16S rRNA where it nucleates assembly of the body of the 30S subunit. Functionally, with S5 and S12 plays an important role in translational accuracy. This is Small ribosomal subunit protein uS4c (rps4) from Pelargonium hortorum (Common geranium).